The chain runs to 243 residues: Isoprenyl transferase 2 (243 aa).

Asp-23 is an active-site residue. Asp-23 lines the Mg(2+) pocket. Residues 24–27 (GNGR), Trp-28, Arg-36, His-40, and 68–70 (STE) each bind substrate. Catalysis depends on Asn-71, which acts as the Proton acceptor. Substrate is bound by residues Trp-72, Arg-74, Arg-191, and 197 to 199 (RTS). Position 210 (Glu-210) interacts with Mg(2+).

The protein belongs to the UPP synthase family. As to quaternary structure, homodimer. Mg(2+) is required as a cofactor.

Its function is as follows. Catalyzes the condensation of isopentenyl diphosphate (IPP) with allylic pyrophosphates generating different type of terpenoids. The protein is Isoprenyl transferase 2 of Corynebacterium efficiens (strain DSM 44549 / YS-314 / AJ 12310 / JCM 11189 / NBRC 100395).